The chain runs to 56 residues: MGNKLRKCTQCNIYTLKDNCPECGESSGNPLPARFSPLDTYGKYRRISKKREMEHA.

Belongs to the NOP10 family.

Its function is as follows. Involved in ribosome biogenesis; more specifically in 18S rRNA pseudouridylation and in cleavage of pre-rRNA. The protein is Ribosome biogenesis protein Nop10 of Methanococcoides burtonii (strain DSM 6242 / NBRC 107633 / OCM 468 / ACE-M).